The sequence spans 274 residues: Cytochrome b-c1 complex subunit Rieske, mitochondrial (274 aa).

The Mitochondrial matrix segment spans residues S79 to S103. Residues R104–M140 traverse the membrane as a helical segment. The Mitochondrial intermembrane portion of the chain corresponds to S141 to G274. The Rieske domain occupies E187–I272. [2Fe-2S] cluster is bound by residues C217, H219, C236, H239, and S241. C222 and C238 are joined by a disulfide.

Belongs to the Rieske iron-sulfur protein family. As to quaternary structure, component of the ubiquinol-cytochrome c oxidoreductase (cytochrome b-c1 complex, complex III, CIII), a multisubunit enzyme composed of 11 subunits. The complex is composed of 3 respiratory subunits cytochrome b, cytochrome c1 and Rieske protein UQCRFS1, 2 core protein subunits UQCRC1/QCR1 and UQCRC2/QCR2, and 6 low-molecular weight protein subunits UQCRH/QCR6, UQCRB/QCR7, UQCRQ/QCR8, UQCR10/QCR9, UQCR11/QCR10 and subunit 9, the cleavage product of Rieske protein UQCRFS1. The complex exists as an obligatory dimer and forms supercomplexes (SCs) in the inner mitochondrial membrane with NADH-ubiquinone oxidoreductase (complex I, CI) and cytochrome c oxidase (complex IV, CIV), resulting in different assemblies (supercomplex SCI(1)III(2)IV(1) and megacomplex MCI(2)III(2)IV(2)). Incorporation of the Rieske protein UQCRFS1 is the penultimate step in complex III assembly. Interacts with TTC19, which is involved in the clearance of UQCRFS1 fragments. In terms of assembly, component of the ubiquinol-cytochrome c oxidoreductase (cytochrome b-c1 complex, complex III, CIII). Subunit 9 corresponds to the mitochondrial targeting sequence (MTS) of Rieske protein UQCRFS1. It is retained after processing and incorporated inside complex III, where it remains bound to the complex and localizes between the 2 core subunits UQCRC1/QCR1 and UQCRC2/QCR2. [2Fe-2S] cluster serves as cofactor. In terms of processing, proteolytic processing is necessary for the correct insertion of UQCRFS1 in the complex III dimer. Several fragments are generated during UQCRFS1 insertion, most probably due to the endogenous matrix-processing peptidase (MPP) activity of the 2 core protein subunits UQCRC1/QCR1 and UQCRC2/QCR2, which are homologous to the 2 mitochondrial-processing peptidase (MPP) subunits beta-MPP and alpha-MPP respectively. The action of the protease is also necessary for the clearance of the UQCRFS1 fragments.

Its subcellular location is the mitochondrion inner membrane. It carries out the reaction a quinol + 2 Fe(III)-[cytochrome c](out) = a quinone + 2 Fe(II)-[cytochrome c](out) + 2 H(+)(out). Functionally, component of the ubiquinol-cytochrome c oxidoreductase, a multisubunit transmembrane complex that is part of the mitochondrial electron transport chain which drives oxidative phosphorylation. The respiratory chain contains 3 multisubunit complexes succinate dehydrogenase (complex II, CII), ubiquinol-cytochrome c oxidoreductase (cytochrome b-c1 complex, complex III, CIII) and cytochrome c oxidase (complex IV, CIV), that cooperate to transfer electrons derived from NADH and succinate to molecular oxygen, creating an electrochemical gradient over the inner membrane that drives transmembrane transport and the ATP synthase. The cytochrome b-c1 complex catalyzes electron transfer from ubiquinol to cytochrome c, linking this redox reaction to translocation of protons across the mitochondrial inner membrane, with protons being carried across the membrane as hydrogens on the quinol. In the process called Q cycle, 2 protons are consumed from the matrix, 4 protons are released into the intermembrane space and 2 electrons are passed to cytochrome c. The Rieske protein is a catalytic core subunit containing a [2Fe-2S] iron-sulfur cluster. It cycles between 2 conformational states during catalysis to transfer electrons from the quinol bound in the Q(0) site in cytochrome b to cytochrome c1. Incorporation of UQCRFS1 is the penultimate step in complex III assembly. In terms of biological role, component of the ubiquinol-cytochrome c oxidoreductase (cytochrome b-c1 complex, complex III, CIII). UQCRFS1 undergoes proteolytic processing once it is incorporated in the complex III dimer. One of the fragments, called subunit 9, corresponds to its mitochondrial targeting sequence (MTS). The proteolytic processing is necessary for the correct insertion of UQCRFS1 in the complex III dimer, but the persistence of UQCRFS1-derived fragments may prevent newly imported UQCRFS1 to be processed and assembled into complex III and is detrimental for the complex III structure and function. The sequence is that of Cytochrome b-c1 complex subunit Rieske, mitochondrial (UQCRFS1) from Aotus azarae (Azara's night monkey).